A 626-amino-acid chain; its full sequence is Anaphase-promoting complex subunit CDC23 (626 aa).

Residue Ser59 is modified to Phosphoserine; by CDC28. 9 TPR repeats span residues 215–248, 295–328, 329–362, 363–396, 397–430, 431–464, 465–498, 499–532, and 536–569; these read ALLY…YSFN, MIKF…FPNF, TFLK…DPYR, LNDL…DRFR, PETC…DKKT, TNAW…CPRD, FKAW…KPWD, RRIW…SQTV, and TSIY…EELL.

It belongs to the APC8/CDC23 family. The APC/C is composed of at least 13 subunits that stay tightly associated throughout the cell cycle: APC1, APC2, APC4, APC5, APC9, APC11, CDC16, CDC23, CDC26, CDC27, DOC1, MND2 and SWM1. CDC23 interacts directly with SWM1 and binds the destruction box (D-box) of the substrate cyclin CLB2. Phosphorylated by CDC28, which is required for the early mitotic activity of the APC/C in its CDC20-bound form.

It localises to the nucleus. The protein localises to the chromosome. Its subcellular location is the centromere. It is found in the kinetochore. It participates in protein modification; protein ubiquitination. Functionally, component of the anaphase promoting complex/cyclosome (APC/C), a cell cycle-regulated E3 ubiquitin-protein ligase complex that controls progression through mitosis and the G1 phase of the cell cycle. The APC/C is thought to confer substrate specificity and, in the presence of ubiquitin-conjugating E2 enzymes, it catalyzes the formation of protein-ubiquitin conjugates that are subsequently degraded by the 26S proteasome. In early mitosis, the APC/C is activated by CDC20 and targets securin PDS1, the B-type cyclin CLB5, and other anaphase inhibitory proteins for proteolysis, thereby triggering the separation of sister chromatids at the metaphase-to-anaphase transition. In late mitosis and in G1, degradation of CLB5 allows activation of the APC/C by CDH1, which is needed to destroy CDC20 and the B-type cyclin CLB2 to allow exit from mitosis and creating the low CDK state necessary for cytokinesis and for reforming prereplicative complexes in G1 prior to another round of replication. This is Anaphase-promoting complex subunit CDC23 (CDC23) from Saccharomyces cerevisiae (strain ATCC 204508 / S288c) (Baker's yeast).